Reading from the N-terminus, the 351-residue chain is Peptide chain release factor 1 (351 aa).

Gln-229 bears the N5-methylglutamine mark.

Belongs to the prokaryotic/mitochondrial release factor family. Methylated by PrmC. Methylation increases the termination efficiency of RF1.

The protein localises to the cytoplasm. In terms of biological role, peptide chain release factor 1 directs the termination of translation in response to the peptide chain termination codons UAG and UAA. This Cereibacter sphaeroides (strain ATCC 17023 / DSM 158 / JCM 6121 / CCUG 31486 / LMG 2827 / NBRC 12203 / NCIMB 8253 / ATH 2.4.1.) (Rhodobacter sphaeroides) protein is Peptide chain release factor 1.